The primary structure comprises 355 residues: Neurogenic differentiation factor 1 (355 aa).

The segment at M1 to A93 is disordered. Residues D58 to D77 are compositionally biased toward acidic residues. Residues P80 to K92 show a composition bias toward basic residues. The Nuclear localization signal signature appears at K86–K92. The region spanning L100–L152 is the bHLH domain. Phosphoserine occurs at positions 161, 258, 265, and 273. S334 bears the Phosphoserine; by CaMK2 mark.

In terms of assembly, efficient DNA-binding requires dimerization with another bHLH protein. Heterodimer with TCF3/E47; the heterodimer is inhibited in presence of ID2, but not NR0B2, to E-box element. Interacts with EP300; the interaction is inhibited by NR0B2. Interacts with RREB1. Interacts with ATOH8. Phosphorylated. In islet cells, phosphorylated on Ser-273 upon glucose stimulation; which may be required for nuclear localization. In activated neurons, phosphorylated on Ser-334; which promotes dendritic growth. Phosphorylated by MAPK1; phosphorylation regulates heterodimerization and DNA-binding activities. Phosphorylation on Ser-265 and Ser-273 increases transactivation on the insulin promoter in glucose-stimulated insulinoma cells. As to expression, most abundant in pancreatic alpha- and beta-cells, less in brain and intestine.

It is found in the cytoplasm. The protein resides in the nucleus. Functionally, acts as a transcriptional activator: mediates transcriptional activation by binding to E box-containing promoter consensus core sequences 5'-CANNTG-3'. Associates with the p300/CBP transcription coactivator complex to stimulate transcription of the secretin gene as well as the gene encoding the cyclin-dependent kinase inhibitor CDKN1A. Contributes to the regulation of several cell differentiation pathways, like those that promote the formation of early retinal ganglion cells, inner ear sensory neurons, granule cells forming either the cerebellum or the dentate gyrus cell layer of the hippocampus, endocrine islet cells of the pancreas and enteroendocrine cells of the small intestine. Together with PAX6 or SIX3, is required for the regulation of amacrine cell fate specification. Also required for dendrite morphogenesis and maintenance in the cerebellar cortex. Associates with chromatin to enhancer regulatory elements in genes encoding key transcriptional regulators of neurogenesis. This is Neurogenic differentiation factor 1 (NEUROD1) from Mesocricetus auratus (Golden hamster).